Here is a 1534-residue protein sequence, read N- to C-terminus: ABC transporter G family member 6 (1534 aa).

A compositionally biased stretch (basic and acidic residues) spans 1–11; the sequence is MAKQDPKDKNS. The interval 1–85 is disordered; sequence MAKQDPKDKN…ESNYDSDDEK (85 aa). Positions 21-65 are enriched in low complexity; the sequence is NNNNNENLDNDQELLNNNNNNNNNNNNNNNNNNNNNNNNNNNNNL. Residues 138 to 385 form the ABC transporter 1 domain; that stretch reads VYCRNATYTV…FKKLGFACPS (248 aa). ATP is bound at residue 177–184; sequence GTPGCGKS. In terms of domain architecture, ABC transmembrane type-2 1 spans 481 to 757; that stretch reads RRNYYNFLTR…VVCFFALKYF (277 aa). 7 helical membrane-spanning segments follow: residues 486–506, 521–541, 566–586, 592–612, 625–645, 652–672, and 734–754; these read NFLT…TLYW, LLFF…NSFF, IICD…IVYW, PVFI…NLSL, IEIA…FSGF, IGGW…FQGL, and VVFG…FFAL. The disordered stretch occupies residues 781 to 907; sequence KQDEESAAIS…KSKNGKDIGS (127 aa). The span at 797 to 808 shows a compositional bias: acidic residues; that stretch reads IDDDNDDDADYE. A compositionally biased stretch (polar residues) spans 830–841; that stretch reads SPSSLTTGSPYY. Residues 842–856 show a composition bias toward low complexity; sequence NINNNNNNLSGSGNN. Polar residues predominate over residues 864 to 873; the sequence is TPSNLSPSVN. Residues 874 to 896 are compositionally biased toward low complexity; the sequence is SPITINSPMPTSPSNNNNNNNSN. Residues 897 to 906 are compositionally biased toward basic and acidic residues; the sequence is EKSKNGKDIG. An ABC transporter 2 domain is found at 924–1166; that stretch reads VKVDDPDNPK…VILDYCDKLG (243 aa). ATP is bound at residue 960-967; the sequence is GPSGAGKS. The 274-residue stretch at 1256 to 1529 folds into the ABC transmembrane type-2 2 domain; it reads LRRPAIFVSN…GLSFWGFKKI (274 aa). The next 6 membrane-spanning stretches (helical) occupy residues 1261–1281, 1296–1316, 1345–1365, 1377–1397, 1404–1424, and 1506–1526; these read IFVS…TLFV, LLFF…PTTV, YPFT…IAGL, CLFI…CLAV, MAST…GFVI, and IDIA…FWGF.

The protein belongs to the ABC transporter superfamily. ABCG family. PDR (TC 3.A.1.205) subfamily.

It localises to the membrane. The protein is ABC transporter G family member 6 (abcG6) of Dictyostelium discoideum (Social amoeba).